A 151-amino-acid polypeptide reads, in one-letter code: Large ribosomal subunit protein bL9 (151 aa).

It belongs to the bacterial ribosomal protein bL9 family.

Its function is as follows. Binds to the 23S rRNA. In Carboxydothermus hydrogenoformans (strain ATCC BAA-161 / DSM 6008 / Z-2901), this protein is Large ribosomal subunit protein bL9.